The following is a 265-amino-acid chain: Methylthioribulose-1-phosphate dehydratase (265 aa).

Cys118 contacts substrate. Residues His136 and His138 each contribute to the Zn(2+) site. Glu161 functions as the Proton donor/acceptor in the catalytic mechanism. Position 226 (His226) interacts with Zn(2+).

It belongs to the aldolase class II family. MtnB subfamily. Zn(2+) serves as cofactor.

It localises to the cytoplasm. The catalysed reaction is 5-(methylsulfanyl)-D-ribulose 1-phosphate = 5-methylsulfanyl-2,3-dioxopentyl phosphate + H2O. The protein operates within amino-acid biosynthesis; L-methionine biosynthesis via salvage pathway; L-methionine from S-methyl-5-thio-alpha-D-ribose 1-phosphate: step 2/6. Functionally, catalyzes the dehydration of methylthioribulose-1-phosphate (MTRu-1-P) into 2,3-diketo-5-methylthiopentyl-1-phosphate (DK-MTP-1-P). The polypeptide is Methylthioribulose-1-phosphate dehydratase (Scheffersomyces stipitis (strain ATCC 58785 / CBS 6054 / NBRC 10063 / NRRL Y-11545) (Yeast)).